The sequence spans 492 residues: MGGRRGPNRTSYYRNPLCEPGSSGASGGGHSSSASVSSVRSRSRTTSGTGLSSPPLAAQTVVPLQHCKIPELPVQASILFELQLFFCQLIALFVHYINIYKTVWWYPPSHPPSHTSLNFHLIDFNLLMVTTIVLGRRFIGSIVKEASQRGKVSLFRSILLFLTRFTVLTATGWSLCRSLIHLFRTYSFLNLLFLCYPFGMYIPFLQLNYDLRKTNLFSHVASMGPREAVSGLARSRDYFLTLRETWKQHTRQLYGPEAMPTHACCLSPSLIRNEVEFLKMDFNWRMKEVLVSSMLSAYYVAFVPVWFVKNTHYYDKRWSCELFLLVSISTSVILMQHLLPASYCDLLHKAAAHLGCWQKVDPALCSNVLQHPWTEECMWPQGVLVKHSKNVYKALGHYNVAIPSDVSHFRFHFFFSNPLRILNILLLLEGAVIVYQLYSLMSSEKWHQTISLALILFSNYYAFFKLLRDRLVLGKAYSYSASPQRDLDHRFS.

Residues 1–53 (MGGRRGPNRTSYYRNPLCEPGSSGASGGGHSSSASVSSVRSRSRTTSGTGLSS) form a disordered region. Residue Asn-8 is glycosylated (N-linked (GlcNAc...) asparagine). Positions 31–53 (SSSASVSSVRSRSRTTSGTGLSS) are enriched in low complexity. 8 helical membrane passes run 77–97 (SILF…VHYI), 115–135 (TSLN…IVLG), 153–175 (SLFR…GWSL), 185–205 (TYSF…IPFL), 288–308 (EVLV…VWFV), 322–342 (LFLL…LPAS), 421–441 (ILNI…YSLM), and 447–467 (HQTI…FKLL).

This sequence belongs to the TMEM39 family.

The protein resides in the endoplasmic reticulum membrane. In terms of biological role, may protect the cells against DNA damage caused by exposure to the cold-warming stress and facilitates tissue damage repair during the recovery phase. The chain is Transmembrane protein 39B from Rattus norvegicus (Rat).